A 149-amino-acid polypeptide reads, in one-letter code: Transcriptional repressor NrdR (149 aa).

The segment at 3-34 (CPFCCAVDTKVIDSRLVGEGSSVRRRRQCVVC) is a zinc-finger region. The ATP-cone domain maps to 49–139 (PRVVKSNDVR…VYRSFEDIRE (91 aa)).

This sequence belongs to the NrdR family. Zn(2+) serves as cofactor.

In terms of biological role, negatively regulates transcription of bacterial ribonucleotide reductase nrd genes and operons by binding to NrdR-boxes. The protein is Transcriptional repressor NrdR of Erwinia tasmaniensis (strain DSM 17950 / CFBP 7177 / CIP 109463 / NCPPB 4357 / Et1/99).